The primary structure comprises 250 residues: Electron transfer flavoprotein subunit beta (250 aa).

This sequence belongs to the ETF beta-subunit/FixA family. In terms of assembly, heterodimer of an alpha and a beta subunit. The cofactor is FAD. It depends on AMP as a cofactor.

The protein resides in the mitochondrion matrix. In terms of biological role, the electron transfer flavoprotein serves as a specific electron acceptor for several dehydrogenases, including five acyl-CoA dehydrogenases, glutaryl-CoA and sarcosine dehydrogenase. It transfers the electrons to the main mitochondrial respiratory chain via ETF-ubiquinone oxidoreductase (ETF dehydrogenase). This Dictyostelium discoideum (Social amoeba) protein is Electron transfer flavoprotein subunit beta (etfb).